We begin with the raw amino-acid sequence, 1505 residues long: Myosin-6 (1505 aa).

One can recognise a Myosin N-terminal SH3-like domain in the interval 8 to 57 (SVGSFVWVEDPDEAWIDGEVVQVNGDEIKVLCTSGKHVVTKISNAYPKDV). A Myosin motor domain is found at 62-731 (SGVDDMTRLA…QMADLDTRRT (670 aa)). Residues 156 to 163 (GESGAGKT) and 209 to 217 (NNNSSRFGK) each bind ATP. 4 actin-binding regions span residues 495-529 (LIEK…YQTF), 531-554 (THKR…AGDV), 589-612 (FPPM…KQQL), and 612-634 (LVSL…KPNN). IQ domains are found at residues 734–763 (LGRS…SAKQ), 757–786 (LRNS…EAAA), 782–811 (REAA…AAVS), 805–834 (LYSA…TKAA), 830–859 (QTKA…AAIT), and 853–882 (LKKA…AARE). A coiled-coil region spans residues 883-1048 (TGALQAAKNK…AEKKIMHQQT (166 aa)). One can recognise a Dilute domain in the interval 1148–1452 (DRLIQMIGSA…ISSMRTLMTE (305 aa)).

It belongs to the TRAFAC class myosin-kinesin ATPase superfamily. Myosin family. Plant myosin class XI subfamily. In terms of assembly, homodimer. Interacts with RABC2A and RABD1. As to expression, expressed in flowers, leaves, roots and stems.

It localises to the cytoplasm. Myosin heavy chain that is required for the cell cycle-regulated transport of various organelles and proteins for their segregation. Functions by binding with its tail domain to receptor proteins on organelles and exerting force with its N-terminal motor domain against actin filaments, thereby transporting its cargo along polarized actin cables. Involved in the tip growth of root hair cells. Plays a major role in trafficking of Golgi stacks, mitochondria and peroxisomes during root hair development. Targets the peroxisome through an interaction with RABC2A. Required for development of pavement cells, trichomes, and stigmatic papillae. The protein is Myosin-6 (XI-2) of Arabidopsis thaliana (Mouse-ear cress).